The chain runs to 339 residues: N-acetyl-gamma-glutamyl-phosphate reductase (339 aa).

Cysteine 145 is an active-site residue.

This sequence belongs to the NAGSA dehydrogenase family. Type 1 subfamily.

The protein localises to the cytoplasm. It carries out the reaction N-acetyl-L-glutamate 5-semialdehyde + phosphate + NADP(+) = N-acetyl-L-glutamyl 5-phosphate + NADPH + H(+). The protein operates within amino-acid biosynthesis; L-arginine biosynthesis; N(2)-acetyl-L-ornithine from L-glutamate: step 3/4. In terms of biological role, catalyzes the NADPH-dependent reduction of N-acetyl-5-glutamyl phosphate to yield N-acetyl-L-glutamate 5-semialdehyde. This Thermotoga sp. (strain RQ2) protein is N-acetyl-gamma-glutamyl-phosphate reductase.